The sequence spans 466 residues: Ribulose bisphosphate carboxylase large chain (466 aa).

Lys-5 carries the post-translational modification N6,N6,N6-trimethyllysine. Asn-114 and Thr-164 together coordinate substrate. Lys-166 functions as the Proton acceptor in the catalytic mechanism. Substrate is bound at residue Lys-168. Residues Lys-192, Asp-194, and Glu-195 each contribute to the Mg(2+) site. N6-carboxylysine is present on Lys-192. The active-site Proton acceptor is the His-285. 3 residues coordinate substrate: Arg-286, His-318, and Ser-370.

The protein belongs to the RuBisCO large chain family. Type I subfamily. Heterohexadecamer of 8 large chains and 8 small chains; disulfide-linked. The disulfide link is formed within the large subunit homodimers. The cofactor is Mg(2+). The disulfide bond which can form in the large chain dimeric partners within the hexadecamer appears to be associated with oxidative stress and protein turnover.

The protein localises to the plastid. It localises to the chloroplast. The catalysed reaction is 2 (2R)-3-phosphoglycerate + 2 H(+) = D-ribulose 1,5-bisphosphate + CO2 + H2O. The enzyme catalyses D-ribulose 1,5-bisphosphate + O2 = 2-phosphoglycolate + (2R)-3-phosphoglycerate + 2 H(+). Its function is as follows. RuBisCO catalyzes two reactions: the carboxylation of D-ribulose 1,5-bisphosphate, the primary event in carbon dioxide fixation, as well as the oxidative fragmentation of the pentose substrate in the photorespiration process. Both reactions occur simultaneously and in competition at the same active site. This is Ribulose bisphosphate carboxylase large chain from Averrhoa carambola (Star fruit).